We begin with the raw amino-acid sequence, 102 residues long: MGKTGNIEHVEERVESELMPPSMYKVILNNDDYTPMDFVIEVLQIFFRKNEQEATDIMLTIHHQGKGICGIFPFGIAETKVIQVNQFARQNQHPLLCSLEKA.

Belongs to the ClpS family. In terms of assembly, binds to the N-terminal domain of the chaperone ClpA.

In terms of biological role, involved in the modulation of the specificity of the ClpAP-mediated ATP-dependent protein degradation. The chain is ATP-dependent Clp protease adapter protein ClpS from Shewanella oneidensis (strain ATCC 700550 / JCM 31522 / CIP 106686 / LMG 19005 / NCIMB 14063 / MR-1).